The sequence spans 391 residues: NAD(P)H-quinone oxidoreductase subunit H, chloroplastic (391 aa).

It belongs to the complex I 49 kDa subunit family. As to quaternary structure, NDH is composed of at least 16 different subunits, 5 of which are encoded in the nucleus.

It localises to the plastid. The protein localises to the chloroplast thylakoid membrane. It catalyses the reaction a plastoquinone + NADH + (n+1) H(+)(in) = a plastoquinol + NAD(+) + n H(+)(out). The enzyme catalyses a plastoquinone + NADPH + (n+1) H(+)(in) = a plastoquinol + NADP(+) + n H(+)(out). Functionally, NDH shuttles electrons from NAD(P)H:plastoquinone, via FMN and iron-sulfur (Fe-S) centers, to quinones in the photosynthetic chain and possibly in a chloroplast respiratory chain. The immediate electron acceptor for the enzyme in this species is believed to be plastoquinone. Couples the redox reaction to proton translocation, and thus conserves the redox energy in a proton gradient. This Physcomitrium patens (Spreading-leaved earth moss) protein is NAD(P)H-quinone oxidoreductase subunit H, chloroplastic.